Reading from the N-terminus, the 586-residue chain is Arginine--tRNA ligase (586 aa).

The short motif at 133–143 (ANPTGPLNIVS) is the 'HIGH' region element.

Belongs to the class-I aminoacyl-tRNA synthetase family. In terms of assembly, monomer.

The protein localises to the cytoplasm. It catalyses the reaction tRNA(Arg) + L-arginine + ATP = L-arginyl-tRNA(Arg) + AMP + diphosphate. This is Arginine--tRNA ligase from Leptospira borgpetersenii serovar Hardjo-bovis (strain JB197).